A 112-amino-acid chain; its full sequence is Secretoglobin family 2B member 24 (112 aa).

The signal sequence occupies residues 1–23 (MKGTLLLLALLMIGELGFHTTEA).

This sequence belongs to the secretoglobin family. Expressed in lacrimal gland, at higher level in males than females.

It localises to the secreted. This Mus musculus (Mouse) protein is Secretoglobin family 2B member 24 (Scgb2b24).